The following is a 297-amino-acid chain: B-lymphocyte antigen CD20 (297 aa).

At 1-51 the chain is on the cytoplasmic side; it reads MTTPRNSMSGTLPVDPMKSPTAMYPVQKIIPKRMPSVVGPTQNFFMRESKT. S36 is subject to Phosphoserine. Residues 52-72 traverse the membrane as a helical segment; it reads LGAVQIMNGLFHIALGSLLMI. Residues 73-75 are Extracellular-facing; that stretch reads HTD. The helical transmembrane segment at 76–96 threads the bilayer; sequence VCAPICITMWYPLWGGIMFII. At 97–122 the chain is on the cytoplasmic side; sequence SGSLLAAADKNPRKSLVKGKMIMNSL. Residues 123–143 form a helical membrane-spanning segment; sequence SLFAAISGIIFLIMDIFNITI. The Extracellular portion of the chain corresponds to 144–188; it reads SHFFKMENLNLIKAPMPYVDIHNCDPANPSEKNSLSIQYCGSIRS. Residues 189-209 form a helical membrane-spanning segment; it reads VFLGVFAVMLIFAFFQKLVTA. Residues 210–297 are Cytoplasmic-facing; that stretch reads GIVENEWKKL…SSPIENDSIP (88 aa). Residue C220 is the site of S-palmitoyl cysteine attachment. Phosphoserine is present on S225. Residues 274-297 are disordered; it reads ELEINFAEPPQEQESSPIENDSIP. The span at 281-290 shows a compositional bias: low complexity; sequence EPPQEQESSP.

Belongs to the MS4A family. As to quaternary structure, forms homotetramers. Interacts with the heavy and light chains of cell surface IgM, the antigen-binding components of the BCR. Post-translationally, phosphorylated. Might be functionally regulated by protein kinase(s). Expressed in PBMCs and lymph node from healthy dogs, in B-cells of canine lymphoma, but not in T-cell lymphoma cells and non-T and non-B-cell lymphoma cells.

The protein resides in the cell membrane. Functionally, B-lymphocyte-specific membrane protein that plays a role in the regulation of cellular calcium influx necessary for the development, differentiation, and activation of B-lymphocytes. Functions as a store-operated calcium (SOC) channel component promoting calcium influx after activation by the B-cell receptor/BCR. The polypeptide is B-lymphocyte antigen CD20 (MS4A1) (Canis lupus familiaris (Dog)).